A 1289-amino-acid chain; its full sequence is Pesticidal crystal protein Cry5Ab (1289 aa).

Residues 1263–1289 are disordered; sequence PLPTDDQNSEGNTASSTNSDTSMNNNQ. Residues 1274-1289 are compositionally biased toward low complexity; sequence NTASSTNSDTSMNNNQ.

It belongs to the delta endotoxin family.

Its function is as follows. Endotoxin with nematicidal activity. The chain is Pesticidal crystal protein Cry5Ab (cry5Ab) from Bacillus thuringiensis subsp. darmstadiensis.